Here is a 226-residue protein sequence, read N- to C-terminus: Staphylococcal superantigen-like 1 (226 aa).

An N-terminal signal peptide occupies residues 1–30 (MKFKAIAKASLALGMLATGVITSNVQSVQA).

It belongs to the staphylococcal/streptococcal toxin family. As to quaternary structure, homodimer.

The protein resides in the secreted. In terms of biological role, mediates virulence by proteolytically cleaving host proteins, including collagens types I and IV as well as human cytokines IL8, IL17A, and IFN-gamma. The sequence is that of Staphylococcal superantigen-like 1 from Staphylococcus aureus (strain NCTC 8325 / PS 47).